The sequence spans 337 residues: Ketol-acid reductoisomerase (NADP(+)) (337 aa).

Residues 1 to 180 enclose the KARI N-terminal Rossmann domain; that stretch reads MKIYYDTDVN…GGGRAGIIET (180 aa). Residues 24-27, R47, S51, and 81-84 contribute to the NADP(+) site; these read YGSQ and DELQ. H106 is an active-site residue. G132 is a binding site for NADP(+). The KARI C-terminal knotted domain occupies 181–326; sequence TFKDETETDL…EKLRAMMPWL (146 aa). Residues D189, E193, E225, and E229 each contribute to the Mg(2+) site. S250 provides a ligand contact to substrate.

Belongs to the ketol-acid reductoisomerase family. It depends on Mg(2+) as a cofactor.

The enzyme catalyses (2R)-2,3-dihydroxy-3-methylbutanoate + NADP(+) = (2S)-2-acetolactate + NADPH + H(+). The catalysed reaction is (2R,3R)-2,3-dihydroxy-3-methylpentanoate + NADP(+) = (S)-2-ethyl-2-hydroxy-3-oxobutanoate + NADPH + H(+). It participates in amino-acid biosynthesis; L-isoleucine biosynthesis; L-isoleucine from 2-oxobutanoate: step 2/4. It functions in the pathway amino-acid biosynthesis; L-valine biosynthesis; L-valine from pyruvate: step 2/4. In terms of biological role, involved in the biosynthesis of branched-chain amino acids (BCAA). Catalyzes an alkyl-migration followed by a ketol-acid reduction of (S)-2-acetolactate (S2AL) to yield (R)-2,3-dihydroxy-isovalerate. In the isomerase reaction, S2AL is rearranged via a Mg-dependent methyl migration to produce 3-hydroxy-3-methyl-2-ketobutyrate (HMKB). In the reductase reaction, this 2-ketoacid undergoes a metal-dependent reduction by NADPH to yield (R)-2,3-dihydroxy-isovalerate. This is Ketol-acid reductoisomerase (NADP(+)) from Thermodesulfovibrio yellowstonii (strain ATCC 51303 / DSM 11347 / YP87).